The following is a 378-amino-acid chain: Erythronate-4-phosphate dehydrogenase (378 aa).

The substrate site is built by Ser45 and Thr67. An NAD(+)-binding site is contributed by Asp147. Arg209 is a catalytic residue. Residue Asp233 participates in NAD(+) binding. Residue Glu238 is part of the active site. His255 acts as the Proton donor in catalysis. Gly258 lines the NAD(+) pocket. Tyr259 serves as a coordination point for substrate.

The protein belongs to the D-isomer specific 2-hydroxyacid dehydrogenase family. PdxB subfamily. Homodimer.

The protein resides in the cytoplasm. The catalysed reaction is 4-phospho-D-erythronate + NAD(+) = (R)-3-hydroxy-2-oxo-4-phosphooxybutanoate + NADH + H(+). It functions in the pathway cofactor biosynthesis; pyridoxine 5'-phosphate biosynthesis; pyridoxine 5'-phosphate from D-erythrose 4-phosphate: step 2/5. Its function is as follows. Catalyzes the oxidation of erythronate-4-phosphate to 3-hydroxy-2-oxo-4-phosphonooxybutanoate. The protein is Erythronate-4-phosphate dehydrogenase of Shewanella denitrificans (strain OS217 / ATCC BAA-1090 / DSM 15013).